Here is a 277-residue protein sequence, read N- to C-terminus: 2-dehydro-3-deoxyphosphooctonate aldolase (277 aa).

This sequence belongs to the KdsA family.

The protein resides in the cytoplasm. The catalysed reaction is D-arabinose 5-phosphate + phosphoenolpyruvate + H2O = 3-deoxy-alpha-D-manno-2-octulosonate-8-phosphate + phosphate. It functions in the pathway carbohydrate biosynthesis; 3-deoxy-D-manno-octulosonate biosynthesis; 3-deoxy-D-manno-octulosonate from D-ribulose 5-phosphate: step 2/3. The protein operates within bacterial outer membrane biogenesis; lipopolysaccharide biosynthesis. The chain is 2-dehydro-3-deoxyphosphooctonate aldolase (kdsA) from Mesorhizobium japonicum (strain LMG 29417 / CECT 9101 / MAFF 303099) (Mesorhizobium loti (strain MAFF 303099)).